Consider the following 88-residue polypeptide: Small ribosomal subunit protein uS15 (88 aa).

Belongs to the universal ribosomal protein uS15 family. Part of the 30S ribosomal subunit. Forms a bridge to the 50S subunit in the 70S ribosome, contacting the 23S rRNA.

Its function is as follows. One of the primary rRNA binding proteins, it binds directly to 16S rRNA where it helps nucleate assembly of the platform of the 30S subunit by binding and bridging several RNA helices of the 16S rRNA. Forms an intersubunit bridge (bridge B4) with the 23S rRNA of the 50S subunit in the ribosome. The sequence is that of Small ribosomal subunit protein uS15 from Caldanaerobacter subterraneus subsp. tengcongensis (strain DSM 15242 / JCM 11007 / NBRC 100824 / MB4) (Thermoanaerobacter tengcongensis).